The chain runs to 764 residues: Molybdenum cofactor sulfurase 3 (764 aa).

An N6-(pyridoxal phosphate)lysine modification is found at Lys228. Cys394 is a catalytic residue. In terms of domain architecture, MOSC spans 607–762; the sequence is LRLLKQSDEE…LYCNSVVEGL (156 aa).

Belongs to the class-V pyridoxal-phosphate-dependent aminotransferase family. MOCOS subfamily. Pyridoxal 5'-phosphate serves as cofactor.

The catalysed reaction is Mo-molybdopterin + L-cysteine + AH2 = thio-Mo-molybdopterin + L-alanine + A + H2O. In terms of biological role, sulfurates the molybdenum cofactor. Sulfation of molybdenum is essential for xanthine dehydrogenase (XDH) and aldehyde oxidase (ADO) enzymes in which molybdenum cofactor is liganded by 1 oxygen and 1 sulfur atom in active form. The protein is Molybdenum cofactor sulfurase 3 of Aedes aegypti (Yellowfever mosquito).